Here is a 189-residue protein sequence, read N- to C-terminus: Ribosome-recycling factor (189 aa).

The protein belongs to the RRF family.

The protein resides in the cytoplasm. Responsible for the release of ribosomes from messenger RNA at the termination of protein biosynthesis. May increase the efficiency of translation by recycling ribosomes from one round of translation to another. The chain is Ribosome-recycling factor from Salinibacter ruber (strain DSM 13855 / M31).